Reading from the N-terminus, the 489-residue chain is Putative general negative regulator of transcription C16C9.04c (489 aa).

The segment at 18-61 adopts an RING-type zinc-finger fold; that stretch reads CPLCMEEIDISDKNFKPCQCGYRVCRFCWHHIKEDLNGRCPACR. Residues 76-109 adopt a coiled-coil conformation; sequence AEEWKMDLHRKNERKKREKERKEVELSNRKHLAN. In terms of domain architecture, RRM spans 116–198; that stretch reads NLAYVNGLSP…VSDGRHLRAS (83 aa). A C3H1-type zinc finger spans residues 199 to 226; that stretch reads YGTTKYCTSYLRNQQCPNPSCMYLHEPG. Composition is skewed to polar residues over residues 246–261 and 466–479; these read LSTKPNVVNGATHSPS and ENQPPTSLGINNGN. Disordered regions lie at residues 246-268 and 458-489; these read LSTKPNVVNGATHSPSPSLPFKT and VPEQEKSAENQPPTSLGINNGNPVMPPPGFQS.

The protein localises to the nucleus. Functionally, may negatively regulate the basal and activated transcription of many genes. The chain is Putative general negative regulator of transcription C16C9.04c from Schizosaccharomyces pombe (strain 972 / ATCC 24843) (Fission yeast).